Here is a 120-residue protein sequence, read N- to C-terminus: NAD(P)H-quinone oxidoreductase subunit 3 (120 aa).

3 helical membrane-spanning segments follow: residues 6–26, 64–84, and 89–109; these read GYDA…LALV, MFAL…PWAV, and LGLL…VALA.

It belongs to the complex I subunit 3 family. In terms of assembly, NDH-1 can be composed of about 15 different subunits; different subcomplexes with different compositions have been identified which probably have different functions.

Its subcellular location is the cellular thylakoid membrane. The catalysed reaction is a plastoquinone + NADH + (n+1) H(+)(in) = a plastoquinol + NAD(+) + n H(+)(out). It catalyses the reaction a plastoquinone + NADPH + (n+1) H(+)(in) = a plastoquinol + NADP(+) + n H(+)(out). Functionally, NDH-1 shuttles electrons from an unknown electron donor, via FMN and iron-sulfur (Fe-S) centers, to quinones in the respiratory and/or the photosynthetic chain. The immediate electron acceptor for the enzyme in this species is believed to be plastoquinone. Couples the redox reaction to proton translocation, and thus conserves the redox energy in a proton gradient. Cyanobacterial NDH-1 also plays a role in inorganic carbon-concentration. The polypeptide is NAD(P)H-quinone oxidoreductase subunit 3 (Synechococcus sp. (strain CC9902)).